Here is a 556-residue protein sequence, read N- to C-terminus: MAVAAAAAAGPVFWRRLLGLLPGRPGLAALLGRLSDRLGRNRDRQRRRSPWLLLAPLLSPAVPQVTSPPCCLCPEGVHRFQWIRNLVPEFGVSSSHVRVLSSPAEFFELMKGQIRVAKRRVVMASLYLGTGPLEQELVDCLESTLEKSLQAKFPSNLKVSILLDFTRGSRGRKNSRTMLLPLLRRFPEQVRVSLFHTPHLRGLLRLLIPERFNETIGLQHIKVYLFDNSVILSGANLSDSYFTNRQDRYVFLQDCAEIADFFTELVDAVGDVSLQLQGDDTVQVVDGMVHPYKGDRAEYCKAANKRVMDVINSARTRQQMLHAQTFHSNSLLTQEDAAAAGDRRPAPDTWIYPLIQMKPFEIQIDEIVTETLLTEAERGAKVYLTTGYFNLTQAYMDLVLGTRAEYQILLASPEVNGFFGAKGVAGAIPAAYVHIERQFFSEVCSLGQQERVQLQEYWRRGWTFHAKGLWLYLAGSSLPCLTLIGSPNFGYRSVHRDLEAQIAIVTENQALQQQLHQEQEQLYLRSGVVSSATFEQPSRQVKLWVKMVTPLIKNFF.

A mitochondrion-targeting transit peptide spans 1–28; it reads MAVAAAAAAGPVFWRRLLGLLPGRPGLA. At S49 the chain carries Phosphoserine. ATP is bound at residue 124–131; the sequence is ASLYLGTG. PLD phosphodiesterase domains follow at residues 215-241 and 460-493; these read TIGLQHIKVYLFDNSVILSGANLSDSY and RGWTFHAKGLWLYLAGSSLPCLTLIGSPNFGYRS. Residues H220, K222, and D227 contribute to the active site.

The protein belongs to the CDP-alcohol phosphatidyltransferase class-II family.

Its subcellular location is the mitochondrion. It catalyses the reaction a CDP-1,2-diacyl-sn-glycerol + sn-glycerol 3-phosphate = a 1,2-diacyl-sn-glycero-3-phospho-(1'-sn-glycero-3'-phosphate) + CMP + H(+). It participates in phospholipid metabolism; phosphatidylglycerol biosynthesis; phosphatidylglycerol from CDP-diacylglycerol: step 1/2. Activated by calcium and magnesium and inhibited by other bivalent cations. In terms of biological role, functions in the biosynthesis of the anionic phospholipids phosphatidylglycerol and cardiolipin. This chain is CDP-diacylglycerol--glycerol-3-phosphate 3-phosphatidyltransferase, mitochondrial (PGS1), found in Homo sapiens (Human).